The chain runs to 408 residues: Secreted mono- and diacylglycerol lipase 2 (408 aa).

The N-terminal stretch at Met-1–Ala-24 is a signal peptide. The N-linked (GlcNAc...) asparagine glycan is linked to Asn-177. Ser-217 (nucleophile) is an active-site residue. Active-site residues include Asp-283 and His-374.

This sequence belongs to the AB hydrolase superfamily. Lipase family. Class 3 subfamily.

The protein resides in the secreted. The catalysed reaction is a monoacylglycerol + H2O = glycerol + a fatty acid + H(+). It carries out the reaction a diacylglycerol + H2O = a monoacylglycerol + a fatty acid + H(+). Functionally, secreted mono- and diacylglycerol lipase involved in plant virulence. Has a substrate preference for p-nitrophenyl esters with a carbon chain length of C10 (p-nitrophenyl caprate). In Gibberella zeae (strain ATCC MYA-4620 / CBS 123657 / FGSC 9075 / NRRL 31084 / PH-1) (Wheat head blight fungus), this protein is Secreted mono- and diacylglycerol lipase 2.